A 450-amino-acid polypeptide reads, in one-letter code: Glutamate--tRNA ligase 2 (450 aa).

Residues Pro-10–Gly-20 carry the 'HIGH' region motif. The 'KMSKS' region motif lies at Lys-232–Arg-236. Lys-235 contacts ATP.

This sequence belongs to the class-I aminoacyl-tRNA synthetase family. Glutamate--tRNA ligase type 1 subfamily. Monomer.

The protein localises to the cytoplasm. The catalysed reaction is tRNA(Glu) + L-glutamate + ATP = L-glutamyl-tRNA(Glu) + AMP + diphosphate. Its function is as follows. Catalyzes the attachment of glutamate to tRNA(Glu) in a two-step reaction: glutamate is first activated by ATP to form Glu-AMP and then transferred to the acceptor end of tRNA(Glu). The chain is Glutamate--tRNA ligase 2 from Wolbachia pipientis subsp. Culex pipiens (strain wPip).